The chain runs to 156 residues: Small ribosomal subunit protein uS7 (156 aa).

Belongs to the universal ribosomal protein uS7 family. In terms of assembly, part of the 30S ribosomal subunit. Contacts proteins S9 and S11.

Functionally, one of the primary rRNA binding proteins, it binds directly to 16S rRNA where it nucleates assembly of the head domain of the 30S subunit. Is located at the subunit interface close to the decoding center, probably blocks exit of the E-site tRNA. This chain is Small ribosomal subunit protein uS7, found in Aliivibrio fischeri (strain MJ11) (Vibrio fischeri).